Reading from the N-terminus, the 317-residue chain is Ribosomal protein L11 methyltransferase (317 aa).

Residues Thr-158, Gly-179, Asp-201, and Asn-244 each contribute to the S-adenosyl-L-methionine site.

The protein belongs to the methyltransferase superfamily. PrmA family.

It is found in the cytoplasm. The enzyme catalyses L-lysyl-[protein] + 3 S-adenosyl-L-methionine = N(6),N(6),N(6)-trimethyl-L-lysyl-[protein] + 3 S-adenosyl-L-homocysteine + 3 H(+). Functionally, methylates ribosomal protein L11. This Streptococcus pyogenes serotype M49 (strain NZ131) protein is Ribosomal protein L11 methyltransferase.